We begin with the raw amino-acid sequence, 274 residues long: Acetyl-coenzyme A carboxylase carboxyl transferase subunit beta (274 aa).

The CoA carboxyltransferase N-terminal domain maps to 16-274 (LWTKCEECKN…LLNLLFYKNA (259 aa)). Zn(2+) contacts are provided by Cys-20, Cys-23, Cys-39, and Cys-42. The segment at 20–42 (CEECKNILLAQELETNFYVCPKC) adopts a C4-type zinc-finger fold.

The protein belongs to the AccD/PCCB family. In terms of assembly, acetyl-CoA carboxylase is a heterohexamer composed of biotin carboxyl carrier protein (AccB), biotin carboxylase (AccC) and two subunits each of ACCase subunit alpha (AccA) and ACCase subunit beta (AccD). Requires Zn(2+) as cofactor.

The protein resides in the cytoplasm. It carries out the reaction N(6)-carboxybiotinyl-L-lysyl-[protein] + acetyl-CoA = N(6)-biotinyl-L-lysyl-[protein] + malonyl-CoA. It participates in lipid metabolism; malonyl-CoA biosynthesis; malonyl-CoA from acetyl-CoA: step 1/1. Functionally, component of the acetyl coenzyme A carboxylase (ACC) complex. Biotin carboxylase (BC) catalyzes the carboxylation of biotin on its carrier protein (BCCP) and then the CO(2) group is transferred by the transcarboxylase to acetyl-CoA to form malonyl-CoA. The polypeptide is Acetyl-coenzyme A carboxylase carboxyl transferase subunit beta (Hydrogenobaculum sp. (strain Y04AAS1)).